Reading from the N-terminus, the 442-residue chain is Methylenetetrahydrofolate--tRNA-(uracil-5-)-methyltransferase TrmFO 1 (442 aa).

9–14 provides a ligand contact to FAD; sequence GAGLAG.

It belongs to the MnmG family. TrmFO subfamily. FAD serves as cofactor.

Its subcellular location is the cytoplasm. It catalyses the reaction uridine(54) in tRNA + (6R)-5,10-methylene-5,6,7,8-tetrahydrofolate + NADH + H(+) = 5-methyluridine(54) in tRNA + (6S)-5,6,7,8-tetrahydrofolate + NAD(+). The enzyme catalyses uridine(54) in tRNA + (6R)-5,10-methylene-5,6,7,8-tetrahydrofolate + NADPH + H(+) = 5-methyluridine(54) in tRNA + (6S)-5,6,7,8-tetrahydrofolate + NADP(+). Catalyzes the folate-dependent formation of 5-methyl-uridine at position 54 (M-5-U54) in all tRNAs. The sequence is that of Methylenetetrahydrofolate--tRNA-(uracil-5-)-methyltransferase TrmFO 1 from Mesoplasma florum (strain ATCC 33453 / NBRC 100688 / NCTC 11704 / L1) (Acholeplasma florum).